Reading from the N-terminus, the 109-residue chain is Cell division protein ZapA (109 aa).

Positions 21–97 form a coiled coil; sequence PEQRDALSQA…QTIEQALLDQ (77 aa).

Belongs to the ZapA family. Type 1 subfamily. As to quaternary structure, homodimer. Interacts with FtsZ.

It localises to the cytoplasm. In terms of biological role, activator of cell division through the inhibition of FtsZ GTPase activity, therefore promoting FtsZ assembly into bundles of protofilaments necessary for the formation of the division Z ring. It is recruited early at mid-cell but it is not essential for cell division. In Enterobacter sp. (strain 638), this protein is Cell division protein ZapA.